A 296-amino-acid polypeptide reads, in one-letter code: 4-hydroxybenzoate octaprenyltransferase (296 aa).

The next 8 membrane-spanning stretches (helical) occupy residues 28–48 (PIGI…AGNG), 52–72 (LANV…GCCI), 102–122 (ALAL…CTNS), 145–167 (TYYP…FTAA), 174–196 (SAWL…YAMV), 219–239 (NIIL…GSRF), 241–261 (LGGW…WEYW), and 275–295 (FLHN…DYAF).

Belongs to the UbiA prenyltransferase family. Requires Mg(2+) as cofactor.

Its subcellular location is the cell inner membrane. The enzyme catalyses all-trans-octaprenyl diphosphate + 4-hydroxybenzoate = 4-hydroxy-3-(all-trans-octaprenyl)benzoate + diphosphate. It functions in the pathway cofactor biosynthesis; ubiquinone biosynthesis. Its function is as follows. Catalyzes the prenylation of para-hydroxybenzoate (PHB) with an all-trans polyprenyl group. Mediates the second step in the final reaction sequence of ubiquinone-8 (UQ-8) biosynthesis, which is the condensation of the polyisoprenoid side chain with PHB, generating the first membrane-bound Q intermediate 3-octaprenyl-4-hydroxybenzoate. This chain is 4-hydroxybenzoate octaprenyltransferase, found in Pseudomonas putida (strain GB-1).